The primary structure comprises 91 residues: MKVNLILFSLFLLVSIMACNVFAFSISGGGSERSYKETEKTSAMTTTHSTKLQPSQAILFKMREDAPPLNLTEEMPPPFPTKANYLIHPVR.

Residues 1-18 form the signal peptide; it reads MKVNLILFSLFLLVSIMA. Cys19 carries N-palmitoyl cysteine lipidation. Residue Cys19 is the site of S-diacylglycerol cysteine attachment.

The protein resides in the cell membrane. This is an uncharacterized protein from Escherichia coli (strain K12).